The sequence spans 462 residues: Asparagine--tRNA ligase (462 aa).

It belongs to the class-II aminoacyl-tRNA synthetase family. As to quaternary structure, homodimer.

The protein resides in the cytoplasm. The catalysed reaction is tRNA(Asn) + L-asparagine + ATP = L-asparaginyl-tRNA(Asn) + AMP + diphosphate + H(+). The sequence is that of Asparagine--tRNA ligase from Thermosynechococcus vestitus (strain NIES-2133 / IAM M-273 / BP-1).